The sequence spans 178 residues: Meiotically up-regulated gene 95 protein (178 aa).

Residues 1–12 (MNLFVYIAQNPT) are Cytoplasmic-facing. Residues 13 to 30 (LTKWFFCCVCTILTMPFF) form a helical; Signal-anchor for type II membrane protein membrane-spanning segment. Topologically, residues 31–178 (KKPYRKRGIS…ESIEKPENDN (148 aa)) are lumenal.

The protein localises to the endoplasmic reticulum membrane. Has a role in meiosis. This Schizosaccharomyces pombe (strain 972 / ATCC 24843) (Fission yeast) protein is Meiotically up-regulated gene 95 protein (mug95).